A 391-amino-acid chain; its full sequence is Pectate lyase D (391 aa).

Positions 1-31 are cleaved as a signal peptide; it reads MNNTRVSFRSTKSLLAAIIATSMMTWSVNRA. 2 residues coordinate Ca(2+): Asp-170 and Asp-213. The active site involves Arg-266.

Belongs to the polysaccharide lyase 1 family. PLBC subfamily. It depends on Ca(2+) as a cofactor.

It is found in the secreted. The enzyme catalyses Eliminative cleavage of (1-&gt;4)-alpha-D-galacturonan to give oligosaccharides with 4-deoxy-alpha-D-galact-4-enuronosyl groups at their non-reducing ends.. It participates in glycan metabolism; pectin degradation; 2-dehydro-3-deoxy-D-gluconate from pectin: step 2/5. In terms of biological role, involved in maceration and soft-rotting of plant tissue. The protein is Pectate lyase D (pelD) of Dickeya chrysanthemi (Pectobacterium chrysanthemi).